We begin with the raw amino-acid sequence, 219 residues long: Probable GTP-binding protein EngB (219 aa).

Positions 40-212 constitute an EngB-type G domain; it reads LLPEIAFIGK…KASLAKCIIK (173 aa). GTP-binding positions include 48–55, 75–79, 93–96, 160–163, and 191–193; these read GKSNVGKS, GRTGQ, DLPG, TKFD, and VSS. The Mg(2+) site is built by Ser-55 and Thr-77.

It belongs to the TRAFAC class TrmE-Era-EngA-EngB-Septin-like GTPase superfamily. EngB GTPase family. It depends on Mg(2+) as a cofactor.

Necessary for normal cell division and for the maintenance of normal septation. The protein is Probable GTP-binding protein EngB of Rickettsia canadensis (strain McKiel).